A 204-amino-acid chain; its full sequence is dTTP/UTP pyrophosphatase (204 aa).

Aspartate 76 (proton acceptor) is an active-site residue.

Belongs to the Maf family. YhdE subfamily. A divalent metal cation is required as a cofactor.

It is found in the cytoplasm. It catalyses the reaction dTTP + H2O = dTMP + diphosphate + H(+). The enzyme catalyses UTP + H2O = UMP + diphosphate + H(+). Functionally, nucleoside triphosphate pyrophosphatase that hydrolyzes dTTP and UTP. May have a dual role in cell division arrest and in preventing the incorporation of modified nucleotides into cellular nucleic acids. This chain is dTTP/UTP pyrophosphatase, found in Salinibacter ruber (strain DSM 13855 / M31).